We begin with the raw amino-acid sequence, 323 residues long: Lipoyl synthase (323 aa).

Residues cysteine 61, cysteine 66, cysteine 72, cysteine 87, cysteine 91, cysteine 94, and serine 300 each contribute to the [4Fe-4S] cluster site. The 217-residue stretch at 73-289 (WDKKHATFMI…ETVAYSKGFL (217 aa)) folds into the Radical SAM core domain.

This sequence belongs to the radical SAM superfamily. Lipoyl synthase family. It depends on [4Fe-4S] cluster as a cofactor.

It is found in the cytoplasm. The catalysed reaction is [[Fe-S] cluster scaffold protein carrying a second [4Fe-4S](2+) cluster] + N(6)-octanoyl-L-lysyl-[protein] + 2 oxidized [2Fe-2S]-[ferredoxin] + 2 S-adenosyl-L-methionine + 4 H(+) = [[Fe-S] cluster scaffold protein] + N(6)-[(R)-dihydrolipoyl]-L-lysyl-[protein] + 4 Fe(3+) + 2 hydrogen sulfide + 2 5'-deoxyadenosine + 2 L-methionine + 2 reduced [2Fe-2S]-[ferredoxin]. It functions in the pathway protein modification; protein lipoylation via endogenous pathway; protein N(6)-(lipoyl)lysine from octanoyl-[acyl-carrier-protein]: step 2/2. Its function is as follows. Catalyzes the radical-mediated insertion of two sulfur atoms into the C-6 and C-8 positions of the octanoyl moiety bound to the lipoyl domains of lipoate-dependent enzymes, thereby converting the octanoylated domains into lipoylated derivatives. The polypeptide is Lipoyl synthase (Rhizobium etli (strain ATCC 51251 / DSM 11541 / JCM 21823 / NBRC 15573 / CFN 42)).